The chain runs to 309 residues: Serine/threonine-protein phosphatase 2A catalytic subunit beta isoform (309 aa).

Residues Asp-57, His-59, Asp-85, and Asn-117 each contribute to the Mn(2+) site. His-118 (proton donor) is an active-site residue. Mn(2+) contacts are provided by His-167 and His-241. At Tyr-307 the chain carries Phosphotyrosine. The residue at position 309 (Leu-309) is a Leucine methyl ester.

Belongs to the PPP phosphatase family. PP-1 subfamily. PP2A consists of a common heterodimeric core enzyme (composed of a 36 kDa catalytic subunit (subunit C) and a 65 kDa constant regulatory subunit (PR65) (subunit A)) that associates with a variety of regulatory subunits. Proteins that associate with the core dimer include three families of regulatory subunits B (the R2/B/PR55/B55, R3/B''/PR72/PR130/PR59 and R5/B'/B56 families), the 48 kDa variable regulatory subunit, viral proteins, and cell signaling molecules. Binds PPME1. May indirectly interact with SGO1, most probably through regulatory B56 subunits. Found in a complex with at least ARL2, PPP2CB, PPP2R1A, PPP2R2A, PPP2R5E and TBCD. Interacts with TBCD. Interacts with CTTNBP2NL. Interacts with PTPA. Part of the core of STRIPAK complexes composed of PP2A catalytic and scaffolding subunits, the striatins (PP2A regulatory subunits), the striatin-associated proteins MOB4, STRIP1 and STRIP2, PDCD10 and members of the STE20 kinases, such as STK24 and STK26. It depends on Mn(2+) as a cofactor. Reversibly methyl esterified on Leu-309 by leucine carboxyl methyltransferase 1 (LCMT1) and protein phosphatase methylesterase 1 (PPME1). Carboxyl methylation influences the affinity of the catalytic subunit for the different regulatory subunits, thereby modulating the PP2A holoenzyme's substrate specificity, enzyme activity and cellular localization. Post-translationally, phosphorylation of either threonine (by autophosphorylation-activated protein kinase) or tyrosine results in inactivation of the phosphatase. Auto-dephosphorylation has been suggested as a mechanism for reactivation. In terms of processing, may be monoubiquitinated by NOSIP.

Its subcellular location is the cytoplasm. The protein resides in the nucleus. The protein localises to the chromosome. It is found in the centromere. It localises to the cytoskeleton. Its subcellular location is the spindle pole. The catalysed reaction is O-phospho-L-seryl-[protein] + H2O = L-seryl-[protein] + phosphate. It catalyses the reaction O-phospho-L-threonyl-[protein] + H2O = L-threonyl-[protein] + phosphate. Its function is as follows. Catalytic subunit of protein phosphatase 2A (PP2A), a serine/threonine phosphatase involved in the regulation of a wide variety of enzymes, signal transduction pathways, and cellular events. PP2A can modulate the activity of phosphorylase B kinase, casein kinase 2, mitogen-stimulated S6 kinase, and MAP-2 kinase. Part of the striatin-interacting phosphatase and kinase (STRIPAK) complexes. STRIPAK complexes have critical roles in protein (de)phosphorylation and are regulators of multiple signaling pathways including Hippo, MAPK, nuclear receptor and cytoskeleton remodeling. Different types of STRIPAK complexes are involved in a variety of biological processes such as cell growth, differentiation, apoptosis, metabolism and immune regulation. In Bos taurus (Bovine), this protein is Serine/threonine-protein phosphatase 2A catalytic subunit beta isoform (PPP2CB).